A 247-amino-acid chain; its full sequence is Neurotrophic factor BDNF precursor form (247 aa).

The N-terminal stretch at 1–18 (MTILFLTMVISYFGCMKA) is a signal peptide. The propeptide occupies 19-128 (APMKEANARG…AANMSMRVRR (110 aa)). Residue N121 is glycosylated (N-linked (GlcNAc...) asparagine). 3 disulfide bridges follow: C141–C208, C186–C237, and C196–C239.

It belongs to the NGF-beta family. In terms of assembly, monomers and homodimers. Binds to NTRK2/TRKB. Can form heterodimers with other neurotrophin family members, such as NTF3 and NTF4 (in vitro), but the physiological relevance of this is not clear. BDNF precursor form: interacts with the heterodimer formed by NGFR and SORCS2. Mature BDNF has much lower affinity for the heterodimer formed by NGFR and SORCS2. N-glycosylated and glycosulfated, contrary to mature BDNF. Post-translationally, mature BDNF is produced by proteolytic removal of the propeptide, catalyzed by a FURIN family member. In addition, the precursor form is proteolytically cleaved within the propeptide, but this is not an obligatory intermediate for the production of mature BDNF. Can be converted into mature BDNF by plasmin (PLG).

It is found in the secreted. Important signaling molecule that activates signaling cascades downstream of NTRK2. During development, promotes the survival and differentiation of selected neuronal populations of the peripheral and central nervous systems. Participates in axonal growth, pathfinding and in the modulation of dendritic growth and morphology. Major regulator of synaptic transmission and plasticity at adult synapses in many regions of the CNS. The versatility of BDNF is emphasized by its contribution to a range of adaptive neuronal responses including long-term potentiation (LTP), long-term depression (LTD), certain forms of short-term synaptic plasticity, as well as homeostatic regulation of intrinsic neuronal excitability. Functionally, important signaling molecule that activates signaling cascades downstream of NTRK2. Activates signaling cascades via the heterodimeric receptor formed by NGFR and SORCS2. Signaling via NGFR and SORCS2 plays a role in synaptic plasticity and long-term depression (LTD). Binding to NGFR and SORCS2 promotes neuronal apoptosis. Promotes neuronal growth cone collapse. The chain is Neurotrophic factor BDNF precursor form (BDNF) from Equus caballus (Horse).